A 122-amino-acid chain; its full sequence is Ribonuclease P protein component 1 (122 aa).

The protein belongs to the eukaryotic/archaeal RNase P protein component 1 family. As to quaternary structure, consists of a catalytic RNA component and at least 4-5 protein subunits.

The protein localises to the cytoplasm. It catalyses the reaction Endonucleolytic cleavage of RNA, removing 5'-extranucleotides from tRNA precursor.. Part of ribonuclease P, a protein complex that generates mature tRNA molecules by cleaving their 5'-ends. The polypeptide is Ribonuclease P protein component 1 (Thermococcus sibiricus (strain DSM 12597 / MM 739)).